The following is a 320-amino-acid chain: Ferrochelatase (320 aa).

Fe cation contacts are provided by His194 and Glu275.

This sequence belongs to the ferrochelatase family.

The protein resides in the cytoplasm. The enzyme catalyses heme b + 2 H(+) = protoporphyrin IX + Fe(2+). It functions in the pathway porphyrin-containing compound metabolism; protoheme biosynthesis; protoheme from protoporphyrin-IX: step 1/1. Catalyzes the ferrous insertion into protoporphyrin IX. The chain is Ferrochelatase from Stenotrophomonas maltophilia (strain R551-3).